The following is a 511-amino-acid chain: Coatomer subunit delta (511 aa).

The span at 168–177 shows a compositional bias: basic and acidic residues; it reads QARRDAERQG. Residues 168 to 188 form a disordered region; sequence QARRDAERQGKKAPGFGGFGS. At serine 223 the chain carries Phosphoserine. N6-acetyllysine occurs at positions 233 and 241. Serine 244 carries the post-translational modification Phosphoserine. In terms of domain architecture, MHD spans 271–511; sequence MESVHMKIEE…TFLVDKYEIL (241 aa). Lysine 309 and lysine 351 each carry N6-acetyllysine. Serine 493 is subject to Phosphoserine.

It belongs to the adaptor complexes medium subunit family. Delta-COP subfamily. In terms of assembly, oligomeric complex that consists of at least the alpha, beta, beta', gamma, delta, epsilon and zeta subunits.

Its subcellular location is the cytoplasm. The protein resides in the golgi apparatus membrane. It is found in the cytoplasmic vesicle. The protein localises to the COPI-coated vesicle membrane. Functionally, the coatomer is a cytosolic protein complex that binds to dilysine motifs and reversibly associates with Golgi non-clathrin-coated vesicles, which further mediate biosynthetic protein transport from the ER, via the Golgi up to the trans Golgi network. Coatomer complex is required for budding from Golgi membranes, and is essential for the retrograde Golgi-to-ER transport of dilysine-tagged proteins. In mammals, the coatomer can only be recruited by membranes associated to ADP-ribosylation factors (ARFs), which are small GTP-binding proteins; the complex also influences the Golgi structural integrity, as well as the processing, activity, and endocytic recycling of LDL receptors. The chain is Coatomer subunit delta (Arcn1) from Rattus norvegicus (Rat).